The primary structure comprises 89 residues: Small ribosomal subunit protein uS15 (89 aa).

It belongs to the universal ribosomal protein uS15 family. Part of the 30S ribosomal subunit. Forms a bridge to the 50S subunit in the 70S ribosome, contacting the 23S rRNA.

One of the primary rRNA binding proteins, it binds directly to 16S rRNA where it helps nucleate assembly of the platform of the 30S subunit by binding and bridging several RNA helices of the 16S rRNA. Functionally, forms an intersubunit bridge (bridge B4) with the 23S rRNA of the 50S subunit in the ribosome. This Desulfosudis oleivorans (strain DSM 6200 / JCM 39069 / Hxd3) (Desulfococcus oleovorans) protein is Small ribosomal subunit protein uS15.